A 272-amino-acid polypeptide reads, in one-letter code: D-aminoacyl-tRNA deacylase (272 aa).

Belongs to the DtdA deacylase family. As to quaternary structure, monomer. Zn(2+) is required as a cofactor.

The catalysed reaction is a D-aminoacyl-tRNA + H2O = a tRNA + a D-alpha-amino acid + H(+). It catalyses the reaction glycyl-tRNA(Ala) + H2O = tRNA(Ala) + glycine + H(+). D-aminoacyl-tRNA deacylase with broad substrate specificity. By recycling D-aminoacyl-tRNA to D-amino acids and free tRNA molecules, this enzyme counteracts the toxicity associated with the formation of D-aminoacyl-tRNA entities in vivo. This Thermococcus kodakarensis (strain ATCC BAA-918 / JCM 12380 / KOD1) (Pyrococcus kodakaraensis (strain KOD1)) protein is D-aminoacyl-tRNA deacylase.